Consider the following 426-residue polypeptide: Serine hydroxymethyltransferase (426 aa).

(6S)-5,6,7,8-tetrahydrofolate-binding positions include L113 and 117–119 (GHL). Residue K222 is modified to N6-(pyridoxal phosphate)lysine. 363 to 365 (SAF) serves as a coordination point for (6S)-5,6,7,8-tetrahydrofolate.

Belongs to the SHMT family. As to quaternary structure, homodimer. The cofactor is pyridoxal 5'-phosphate.

It is found in the cytoplasm. It catalyses the reaction (6R)-5,10-methylene-5,6,7,8-tetrahydrofolate + glycine + H2O = (6S)-5,6,7,8-tetrahydrofolate + L-serine. The protein operates within one-carbon metabolism; tetrahydrofolate interconversion. Its pathway is amino-acid biosynthesis; glycine biosynthesis; glycine from L-serine: step 1/1. Its function is as follows. Catalyzes the reversible interconversion of serine and glycine with tetrahydrofolate (THF) serving as the one-carbon carrier. This reaction serves as the major source of one-carbon groups required for the biosynthesis of purines, thymidylate, methionine, and other important biomolecules. Also exhibits THF-independent aldolase activity toward beta-hydroxyamino acids, producing glycine and aldehydes, via a retro-aldol mechanism. The polypeptide is Serine hydroxymethyltransferase (Porphyromonas gingivalis (strain ATCC 33277 / DSM 20709 / CIP 103683 / JCM 12257 / NCTC 11834 / 2561)).